Here is a 270-residue protein sequence, read N- to C-terminus: UPF0354 protein BC_4690 (270 aa).

Belongs to the UPF0354 family.

In Bacillus cereus (strain ATCC 14579 / DSM 31 / CCUG 7414 / JCM 2152 / NBRC 15305 / NCIMB 9373 / NCTC 2599 / NRRL B-3711), this protein is UPF0354 protein BC_4690.